Consider the following 211-residue polypeptide: Histidine biosynthesis bifunctional protein HisIE (211 aa).

The segment at 1–122 (MSVKAAEVSS…DPQEESQMVW (122 aa)) is phosphoribosyl-AMP cyclohydrolase. A phosphoribosyl-ATP pyrophosphohydrolase region spans residues 123–211 (LHQLEQLLAA…VINKLKERHK (89 aa)).

The protein in the N-terminal section; belongs to the PRA-CH family. In the C-terminal section; belongs to the PRA-PH family.

Its subcellular location is the cytoplasm. The enzyme catalyses 1-(5-phospho-beta-D-ribosyl)-ATP + H2O = 1-(5-phospho-beta-D-ribosyl)-5'-AMP + diphosphate + H(+). It catalyses the reaction 1-(5-phospho-beta-D-ribosyl)-5'-AMP + H2O = 1-(5-phospho-beta-D-ribosyl)-5-[(5-phospho-beta-D-ribosylamino)methylideneamino]imidazole-4-carboxamide. The protein operates within amino-acid biosynthesis; L-histidine biosynthesis; L-histidine from 5-phospho-alpha-D-ribose 1-diphosphate: step 2/9. Its pathway is amino-acid biosynthesis; L-histidine biosynthesis; L-histidine from 5-phospho-alpha-D-ribose 1-diphosphate: step 3/9. The protein is Histidine biosynthesis bifunctional protein HisIE of Vibrio vulnificus (strain YJ016).